We begin with the raw amino-acid sequence, 482 residues long: 2-succinylbenzoate--CoA ligase (482 aa).

This sequence belongs to the ATP-dependent AMP-binding enzyme family. MenE subfamily.

The catalysed reaction is 2-succinylbenzoate + ATP + CoA = 2-succinylbenzoyl-CoA + AMP + diphosphate. It functions in the pathway quinol/quinone metabolism; 1,4-dihydroxy-2-naphthoate biosynthesis; 1,4-dihydroxy-2-naphthoate from chorismate: step 5/7. Its pathway is quinol/quinone metabolism; menaquinone biosynthesis. In terms of biological role, converts 2-succinylbenzoate (OSB) to 2-succinylbenzoyl-CoA (OSB-CoA). The polypeptide is 2-succinylbenzoate--CoA ligase (Bacillus cereus (strain ATCC 14579 / DSM 31 / CCUG 7414 / JCM 2152 / NBRC 15305 / NCIMB 9373 / NCTC 2599 / NRRL B-3711)).